We begin with the raw amino-acid sequence, 885 residues long: DNA mismatch repair protein MutS (885 aa).

ATP is bound at residue glycine 626 to serine 633.

It belongs to the DNA mismatch repair MutS family.

This protein is involved in the repair of mismatches in DNA. It is possible that it carries out the mismatch recognition step. This protein has a weak ATPase activity. This is DNA mismatch repair protein MutS from Burkholderia cenocepacia (strain HI2424).